A 101-amino-acid chain; its full sequence is MIPGEILTDDGEHELNAGRATLSLVVANTGDRPVQVGSHYHFFEVNDALSFDRAVARGFRLNIAAGTAVRFEPGQTRTVELVALAGERAVYGFQGKVMGPL.

It belongs to the urease beta subunit family. In terms of assembly, heterotrimer of UreA (gamma), UreB (beta) and UreC (alpha) subunits. Three heterotrimers associate to form the active enzyme.

It localises to the cytoplasm. The enzyme catalyses urea + 2 H2O + H(+) = hydrogencarbonate + 2 NH4(+). The protein operates within nitrogen metabolism; urea degradation; CO(2) and NH(3) from urea (urease route): step 1/1. This chain is Urease subunit beta, found in Burkholderia orbicola (strain MC0-3).